A 100-amino-acid chain; its full sequence is Urease subunit gamma (100 aa).

Belongs to the urease gamma subunit family. In terms of assembly, heterotrimer of UreA (gamma), UreB (beta) and UreC (alpha) subunits. Three heterotrimers associate to form the active enzyme.

Its subcellular location is the cytoplasm. It catalyses the reaction urea + 2 H2O + H(+) = hydrogencarbonate + 2 NH4(+). It participates in nitrogen metabolism; urea degradation; CO(2) and NH(3) from urea (urease route): step 1/1. This Clostridium perfringens protein is Urease subunit gamma.